The following is a 694-amino-acid chain: Heat shock protein HSP 90-alpha (694 aa).

Residues Thr-5 and Thr-7 each carry the phosphothreonine; by PRKDC modification. Residues 9-236 (DQPMEEEEVE…DKEVSDDEAK (228 aa)) form an interaction with NR3C1 region. Asn-51 lines the ATP pocket. An N6-acetyllysine mark is found at Lys-58 and Lys-84. The ATP site is built by Asp-93, Lys-112, and Phe-138. Positions 228–241 (KEVSDDEAKQPDDK) are enriched in basic and acidic residues. Residues 228-275 (KEVSDDEAKQPDDKPEIEDVGSDEEEEEKKDGDIDQEELNKTKPIWTR) form a disordered region. 2 positions are modified to phosphoserine: Ser-231 and Ser-249. Over residues 242-255 (PEIEDVGSDEEEEE) the composition is skewed to acidic residues. A compositionally biased stretch (basic and acidic residues) spans 256–268 (KKDGDIDQEELNK). Residues 258–578 (DGDIDQEELN…TANMERIMKA (321 aa)) form an interaction with NR3C1 region. The interval 261 to 582 (IDQEELNKTK…ERIMKAQALR (322 aa)) is interaction with FNIP2 and TSC1. The segment at 261-694 (IDQEELNKTK…DDTSRMEEVD (434 aa)) is interaction with FLCN and FNIP1. Tyr-289 bears the Phosphotyrosine mark. Residue Arg-376 participates in ATP binding. Position 419 is an N6-acetyllysine (Lys-419). Position 429 is a phosphoserine (Ser-429). At Lys-434 the chain carries N6-acetyllysine. Position 452 is a phosphoserine (Ser-452). Lys-465 carries the post-translational modification N6-acetyllysine. Tyr-468 is subject to Phosphotyrosine. Lys-547 carries the N6-acetyllysine modification. The residue at position 560 (Cys-560) is an S-nitrosocysteine. Residues 590–693 (MAAKKHLEVN…DDDTSRMEEV (104 aa)) are interaction with NR1D1. Residue Ser-603 is modified to Phosphoserine. A required for homodimerization region spans residues 644–694 (QTHANRIYRMIKLGLGIDEDDPTADDTAAAVTEEMPPLEGDDDTSRMEEVD). Residues 662-694 (EDDPTADDTAAAVTEEMPPLEGDDDTSRMEEVD) form a disordered region. Positions 668–677 (DDTAAAVTEE) are enriched in low complexity. The short motif at 685–694 (DDTSRMEEVD) is the TPR repeat-binding element. The interval 690-694 (MEEVD) is essential for interaction with SMYD3, TSC1 and STIP1/HOP. The interval 691–694 (EEVD) is essential for interaction with SGTA and TTC1.

This sequence belongs to the heat shock protein 90 family. In terms of assembly, homodimer. Identified in NR3C1/GCR steroid receptor-chaperone complexes formed at least by NR3C1, HSP90AA1 and a variety of proteins containing TPR repeats such as FKBP4, FKBP5, PPID, PPP5C or STIP1. Forms a complex containing HSP90AA1, TSC1 and TSC2; TSC1 is required to recruit TCS2 to the complex. The closed form interacts (via the middle domain and TPR repeat-binding motif) with co-chaperone TSC1 (via C-terminus). Interacts with TOM34. Interacts with TERT; the interaction, together with PTGES3, is required for correct assembly and stabilization of the TERT holoenzyme complex. Interacts with CHORDC1 and DNAJC7. Interacts with STUB1 and UBE2N; may couple the chaperone and ubiquitination systems. Interacts (via TPR repeat-binding motif) with PPP5C (via TPR repeats); the interaction is direct and activates PPP5C phosphatase activity. Following LPS binding, may form a complex with CXCR4, GDF5 and HSPA8. Interacts with KSR1. Interacts with co-chaperone CDC37 (via C-terminus); the interaction inhibits HSP90AA1 ATPase activity. May interact with NWD1. Interacts with FNIP1 and FNIP2; the interaction inhibits HSP90AA1 ATPase activity. Interacts with co-chaperone AHSA1 (phosphorylated on 'Tyr-223'); the interaction activates HSP90AA1 ATPase activity and results in the dissociation of TSC1 from HSP90AA1. Interacts with FLCN in the presence of FNIP1. Interacts with HSP70, STIP1 and PTGES3. Interacts with SMYD3; this interaction enhances SMYD3 histone-lysine N-methyltransferase. Interacts with SGTA (via TPR repeats). Interacts with TTC1 (via TPR repeats). Interacts with HSF1 in an ATP-dependent manner. Interacts with MET; the interaction suppresses MET kinase activity. Interacts with ERBB2 in an ATP-dependent manner; the interaction suppresses ERBB2 kinase activity. Interacts with HIF1A, KEAP1 and RHOBTB2. Interacts with HSF1; this interaction is decreased in a IER5-dependent manner, promoting HSF1 accumulation in the nucleus, homotrimerization and DNA-binding activities. Interacts with STUB1 and SMAD3. Interacts with HSP90AB1; interaction is constitutive. Interacts with HECTD1 (via N-terminus). Interacts with NR3C1 (via domain NR LBD) and NR1D1 (via domain NR LBD). Interacts with NLPR12. Interacts with PDCL3. Interacts with TOMM70; the interaction is required for preprotein mitochondrial import. Interacts with TOMM70, IRF3 and TBK1; the interactions are direct and mediate the association of TOMM70 with IRF3 and TBK1. Forms a complex with ASL, ASS1 and NOS2; the complex regulates cell-autonomous L-arginine synthesis and citrulline recycling while channeling extracellular L-arginine to nitric oxide synthesis pathway. In terms of processing, ISGylated. S-nitrosylated; negatively regulates the ATPase activity and the activation of eNOS by HSP90AA1. Post-translationally, ubiquitinated via 'Lys-63'-linked polyubiquitination by HECTD1. Ubiquitination promotes translocation into the cytoplasm away from the membrane and secretory pathways.

The protein resides in the nucleus. The protein localises to the cytoplasm. Its subcellular location is the melanosome. It localises to the cell membrane. It is found in the mitochondrion. The catalysed reaction is ATP + H2O = ADP + phosphate + H(+). With respect to regulation, in the resting state, through the dimerization of its C-terminal domain, HSP90 forms a homodimer which is defined as the open conformation. Upon ATP-binding, the N-terminal domain undergoes significant conformational changes and comes in contact to form an active closed conformation. After HSP90 finishes its chaperoning tasks of assisting the proper folding, stabilization and activation of client proteins under the active state, ATP molecule is hydrolyzed to ADP which then dissociates from HSP90 and directs the protein back to the resting state. Co-chaperone TSC1 promotes ATP binding and inhibits HSP90AA1 ATPase activity. Binding to phosphorylated AHSA1 promotes HSP90AA1 ATPase activity. Inhibited by geldanamycin, Ganetespib (STA-9090) and SNX-2112. In terms of biological role, molecular chaperone that promotes the maturation, structural maintenance and proper regulation of specific target proteins involved for instance in cell cycle control and signal transduction. Undergoes a functional cycle that is linked to its ATPase activity which is essential for its chaperone activity. This cycle probably induces conformational changes in the client proteins, thereby causing their activation. Interacts dynamically with various co-chaperones that modulate its substrate recognition, ATPase cycle and chaperone function. Engages with a range of client protein classes via its interaction with various co-chaperone proteins or complexes, that act as adapters, simultaneously able to interact with the specific client and the central chaperone itself. Recruitment of ATP and co-chaperone followed by client protein forms a functional chaperone. After the completion of the chaperoning process, properly folded client protein and co-chaperone leave HSP90 in an ADP-bound partially open conformation and finally, ADP is released from HSP90 which acquires an open conformation for the next cycle. Plays a critical role in mitochondrial import, delivers preproteins to the mitochondrial import receptor TOMM70. Apart from its chaperone activity, it also plays a role in the regulation of the transcription machinery. HSP90 and its co-chaperones modulate transcription at least at three different levels. In the first place, they alter the steady-state levels of certain transcription factors in response to various physiological cues. Second, they modulate the activity of certain epigenetic modifiers, such as histone deacetylases or DNA methyl transferases, and thereby respond to the change in the environment. Third, they participate in the eviction of histones from the promoter region of certain genes and thereby turn on gene expression. Binds bacterial lipopolysaccharide (LPS) and mediates LPS-induced inflammatory response, including TNF secretion by monocytes. Antagonizes STUB1-mediated inhibition of TGF-beta signaling via inhibition of STUB1-mediated SMAD3 ubiquitination and degradation. Mediates the association of TOMM70 with IRF3 or TBK1 in mitochondrial outer membrane which promotes host antiviral response. This chain is Heat shock protein HSP 90-alpha (HSP90AA1), found in Oryctolagus cuniculus (Rabbit).